The following is a 78-amino-acid chain: MHEKLLTLCDCAFEARLIELEMRVSFQEQALTEISEALAETRLIGARNAELMRHLLEELGKVRNTLYEHPIDEPPPHY.

It belongs to the SlyX family.

This Xylella fastidiosa (strain M23) protein is Protein SlyX homolog.